Reading from the N-terminus, the 202-residue chain is Odorant-binding protein 59a (202 aa).

Residues 1–20 (MKQLIFLLICLSCGTCSIYA) form the signal peptide. Residues 43-53 (HRQDEDEDRGR) show a composition bias toward basic and acidic residues. Positions 43 to 105 (HRQDEDEDRG…QSDGRNHTSN (63 aa)) are disordered. Gly residues predominate over residues 54-65 (GGQGRQGNGYEY).

Belongs to the PBP/GOBP family. Expressed in non-neuronal cells in hygrosensitive sensilla in the second chamber of the sacculus of the antenna third segment (at protein level).

Its subcellular location is the secreted. Odorant-binding protein required for hygrotaxis behavior in humidity-detecting sensilla. The protein is Odorant-binding protein 59a of Drosophila melanogaster (Fruit fly).